Reading from the N-terminus, the 363-residue chain is MESPRVEESYDKMSELKAFDDTKAGVKGLVDSGITKVPQIFVLPPKDRAKKCETHFVFPVIDLQGIDEDPIKHKEIVDKVRDASEKWGFFQVVNHGIPTSVLDRTLQGTRQFFEQDNEVKKQYYTRDTAKKVVYTSNLDLYKSSVPAASWRDTIFCYMAPNPPSLQEFPTPCGESLIDFSKDVKKLGFTLLELLSEGLGLDRSYLKDYMDCFHLFCSCNYYPPCPQPELTMGTIQHTDIGFVTILLQDDMGGLQVLHQNHWVDVPPTPGSLVVNIGDFLQLLSNDKYLSVEHRAISNNVGSRMSITCFFGESPYQSSKLYGPITELLSEDNPPKYRATTVKDHTSYLHNRGLDGTSALSRYKI.

Residues 212-312 (FHLFCSCNYY…MSITCFFGES (101 aa)) form the Fe2OG dioxygenase domain. Positions 236, 238, and 292 each coordinate Fe cation.

Belongs to the iron/ascorbate-dependent oxidoreductase family.

The sequence is that of 1-aminocyclopropane-1-carboxylate oxidase homolog (ACO3) from Solanum lycopersicum (Tomato).